The following is a 631-amino-acid chain: Probable methyltransferase PMT16 (631 aa).

Topologically, residues 1 to 14 (MNLFTRISSRTKKA) are cytoplasmic. Residues 15–35 (NLYYVTLVALLCIASYLLGIW) form a helical; Signal-anchor for type II membrane protein membrane-spanning segment. The Lumenal segment spans residues 36–631 (QNTAVNPRAA…EDKNNTSALS (596 aa)). Residues Asn61, Asn230, and Asn626 are each glycosylated (N-linked (GlcNAc...) asparagine).

It belongs to the methyltransferase superfamily.

The protein resides in the endoplasmic reticulum membrane. This is Probable methyltransferase PMT16 from Arabidopsis thaliana (Mouse-ear cress).